A 566-amino-acid chain; its full sequence is Oxygen-dependent choline dehydrogenase (566 aa).

Asp-7–Glu-36 provides a ligand contact to FAD. A disordered region spans residues Asn-180–Ser-202. The active-site Proton acceptor is His-474.

Belongs to the GMC oxidoreductase family. The cofactor is FAD.

The catalysed reaction is choline + A = betaine aldehyde + AH2. It catalyses the reaction betaine aldehyde + NAD(+) + H2O = glycine betaine + NADH + 2 H(+). It functions in the pathway amine and polyamine biosynthesis; betaine biosynthesis via choline pathway; betaine aldehyde from choline (cytochrome c reductase route): step 1/1. Its function is as follows. Involved in the biosynthesis of the osmoprotectant glycine betaine. Catalyzes the oxidation of choline to betaine aldehyde and betaine aldehyde to glycine betaine at the same rate. The sequence is that of Oxygen-dependent choline dehydrogenase from Burkholderia cenocepacia (strain HI2424).